A 294-amino-acid chain; its full sequence is Glycine--tRNA ligase alpha subunit (294 aa).

It belongs to the class-II aminoacyl-tRNA synthetase family. As to quaternary structure, tetramer of two alpha and two beta subunits.

The protein resides in the cytoplasm. The catalysed reaction is tRNA(Gly) + glycine + ATP = glycyl-tRNA(Gly) + AMP + diphosphate. The protein is Glycine--tRNA ligase alpha subunit of Natranaerobius thermophilus (strain ATCC BAA-1301 / DSM 18059 / JW/NM-WN-LF).